The chain runs to 434 residues: Enolase (434 aa).

Glutamine 163 is a binding site for (2R)-2-phosphoglycerate. Catalysis depends on glutamate 205, which acts as the Proton donor. Mg(2+)-binding residues include aspartate 242, glutamate 291, and aspartate 318. (2R)-2-phosphoglycerate contacts are provided by lysine 343, arginine 372, serine 373, and lysine 394. Residue lysine 343 is the Proton acceptor of the active site.

This sequence belongs to the enolase family. The cofactor is Mg(2+).

The protein resides in the cytoplasm. It localises to the secreted. It is found in the cell surface. Its subcellular location is the cell wall. It carries out the reaction (2R)-2-phosphoglycerate = phosphoenolpyruvate + H2O. It participates in carbohydrate degradation; glycolysis; pyruvate from D-glyceraldehyde 3-phosphate: step 4/5. Its function is as follows. Catalyzes the reversible conversion of 2-phosphoglycerate (2-PG) into phosphoenolpyruvate (PEP). It is essential for the degradation of carbohydrates via glycolysis. The protein is Enolase of Streptococcus pneumoniae serotype 2 (strain D39 / NCTC 7466).